We begin with the raw amino-acid sequence, 445 residues long: Phosphoglucosamine mutase (445 aa).

Serine 102 (phosphoserine intermediate) is an active-site residue. The Mg(2+) site is built by serine 102, aspartate 241, aspartate 243, and aspartate 245. Residue serine 102 is modified to Phosphoserine.

This sequence belongs to the phosphohexose mutase family. Mg(2+) is required as a cofactor. Activated by phosphorylation.

It catalyses the reaction alpha-D-glucosamine 1-phosphate = D-glucosamine 6-phosphate. In terms of biological role, catalyzes the conversion of glucosamine-6-phosphate to glucosamine-1-phosphate. The sequence is that of Phosphoglucosamine mutase from Haemophilus influenzae (strain ATCC 51907 / DSM 11121 / KW20 / Rd).